Consider the following 629-residue polypeptide: G1-specific transcription factors activator MSA1 (629 aa).

Residues Met-1–Arg-11 are compositionally biased toward basic residues. Disordered stretches follow at residues Met-1–Leu-60, Ser-83–Tyr-106, Tyr-217–Gln-286, Val-455–Ser-485, and Pro-586–Gln-629. Over residues Pro-21–Gly-37 the composition is skewed to polar residues. Positions Ile-245–Ile-260 are enriched in polar residues. Low complexity-rich tracts occupy residues Leu-261–Pro-277 and Val-455–Gln-475. Ser-268 bears the Phosphoserine mark. Residues Lys-614–Gln-629 show a composition bias toward basic and acidic residues.

Interacts with transcription complexes SCB-binding factor (SBF) and MCB-binding factor (MBF) at their target promoters. Interacts with MBP1 and SWI6. In terms of processing, phosphorylated by CDC28.

In terms of biological role, activator of G1-specific transcription factors, MBF and SBF. Promotes both the timing of G1-specific gene transcription and cell cycle initiation. Associates with SBF- and MBF-regulated target promoters and this binding is maximal during the G1 phase, prior to maximum budding. Affects cell cycle initiation by advancing the timing of transcription of G1-specific genes. Overexpression advances the timing of SBF-dependent transcription and budding. Depletion delays both indicators of cell cycle initiation. The sequence is that of G1-specific transcription factors activator MSA1 (MSA1) from Saccharomyces cerevisiae (strain ATCC 204508 / S288c) (Baker's yeast).